A 604-amino-acid polypeptide reads, in one-letter code: MRLSQMLFVTLRDDPADAEIPSHKLLLRAGYIRRIGSGLYAYLPLMWRVLQKVSQIVREEMNATGAQECLLPQLQPADLWKESGRWDTYTKAEGIMFSLIDRREQQLGLGPTHEEVITAIARDMIRSYRQLPLHLYQIQTKFRDEIRPRFGLMRGREFIMKDGYSFHTDEASLKETYQDMYKAYSNILRRSGLAFRAVEADSGAIGGSGSTEFMILAEAGEDEVLYTEDGKYAANVEKAVSLPIDAETSRFTTYEKRDTPGTETIEKVCQLLNCSPTQLVKNVLYQTVYDNGKTVLVLVSIRGDQEVNEVKLQNELTKLASEYGAKTIISLNVPNVEAQQAWTTKSLPLGYIAPDIADEYIAANKQIHSKFLRLVDQTAVDLKNFVTGANEAGYHVVSANWDEQFKLPERVVDIRKSRPGDRAIHNPEQTLQSARGIEAGHIFQLGTKYSQAMGATYTNEQGEEKPLLMGCFGVGVSRLAQAAVEQSYDNDGIIWPVAIAPYHAIVTIPNIKDAQQVEVAQKLYTELNQAGIETLLDDRDERAGVKFKDADLIGIPYRIVTGRAIANGKVEVVERATRKSQEIVIDEVTTTLQQWITAAIDVKN.

Belongs to the class-II aminoacyl-tRNA synthetase family. ProS type 1 subfamily. In terms of assembly, homodimer.

It is found in the cytoplasm. It carries out the reaction tRNA(Pro) + L-proline + ATP = L-prolyl-tRNA(Pro) + AMP + diphosphate. In terms of biological role, catalyzes the attachment of proline to tRNA(Pro) in a two-step reaction: proline is first activated by ATP to form Pro-AMP and then transferred to the acceptor end of tRNA(Pro). As ProRS can inadvertently accommodate and process non-cognate amino acids such as alanine and cysteine, to avoid such errors it has two additional distinct editing activities against alanine. One activity is designated as 'pretransfer' editing and involves the tRNA(Pro)-independent hydrolysis of activated Ala-AMP. The other activity is designated 'posttransfer' editing and involves deacylation of mischarged Ala-tRNA(Pro). The misacylated Cys-tRNA(Pro) is not edited by ProRS. The protein is Proline--tRNA ligase of Nostoc punctiforme (strain ATCC 29133 / PCC 73102).